Reading from the N-terminus, the 1488-residue chain is Putative E3 ubiquitin-protein ligase LIN (1488 aa).

Disordered stretches follow at residues 297 to 330 (GFSMTTRRSNDGLNETTRENIASNSNHSKGEQSS), 351 to 414 (YDAS…PLRR), and 432 to 500 (IVSD…SSSS). A compositionally biased stretch (basic and acidic residues) spans 366-380 (EPKKNIKDEDVEPKV). Positions 382–411 (RSNQKNQMNSPNISPMESPRRASNYSSTNP) are enriched in polar residues. Positions 432–444 (IVSDHSLSSSPDT) are enriched in low complexity. Polar residues predominate over residues 468 to 486 (SQTPSMNQDNENSLVLNDS). In terms of domain architecture, U-box spans 512–587 (KPPKDFVCPI…VSWKEQNPEL (76 aa)). 4 WD repeats span residues 1207–1244 (SSNGEVLSLHYLNGQVLSGHADGTIKVWDARKRIPRVI), 1249–1290 (EHKK…DVYD), 1412–1451 (SLSTGLDVHRVAINSDFIFAGTKFGTIEVWLKDKFTRVAS), and 1456–1488 (GGNTKITSLASDADGMMLFVGSSDGKIQVWALD).

As to expression, expressed in roots and nodules.

The enzyme catalyses S-ubiquitinyl-[E2 ubiquitin-conjugating enzyme]-L-cysteine + [acceptor protein]-L-lysine = [E2 ubiquitin-conjugating enzyme]-L-cysteine + N(6)-ubiquitinyl-[acceptor protein]-L-lysine.. Its pathway is protein modification; protein ubiquitination. Its function is as follows. Putative E3 ubiquitin ligase involved in the rhizobial infection process. Plays an important role in the early steps of bacterial symbiont thread formation in roots, and in growth, differentiation and maintenance of nodules. The chain is Putative E3 ubiquitin-protein ligase LIN from Medicago truncatula (Barrel medic).